The sequence spans 198 residues: Pyridoxal 5'-phosphate synthase subunit PdxT (198 aa).

Residue 50–52 (GES) coordinates L-glutamine. The Nucleophile role is filled by Cys82. Residues Arg111 and 140–141 (IR) each bind L-glutamine. Residues His177 and Glu179 each act as charge relay system in the active site.

The protein belongs to the glutaminase PdxT/SNO family. As to quaternary structure, in the presence of PdxS, forms a dodecamer of heterodimers. Only shows activity in the heterodimer.

It catalyses the reaction aldehydo-D-ribose 5-phosphate + D-glyceraldehyde 3-phosphate + L-glutamine = pyridoxal 5'-phosphate + L-glutamate + phosphate + 3 H2O + H(+). The catalysed reaction is L-glutamine + H2O = L-glutamate + NH4(+). It participates in cofactor biosynthesis; pyridoxal 5'-phosphate biosynthesis. Functionally, catalyzes the hydrolysis of glutamine to glutamate and ammonia as part of the biosynthesis of pyridoxal 5'-phosphate. The resulting ammonia molecule is channeled to the active site of PdxS. This chain is Pyridoxal 5'-phosphate synthase subunit PdxT, found in Leifsonia xyli subsp. xyli (strain CTCB07).